A 218-amino-acid polypeptide reads, in one-letter code: Thiopurine S-methyltransferase (218 aa).

4 residues coordinate S-adenosyl-L-methionine: Trp10, Leu45, Glu66, and Arg123.

Belongs to the class I-like SAM-binding methyltransferase superfamily. TPMT family.

It is found in the cytoplasm. It carries out the reaction S-adenosyl-L-methionine + a thiopurine = S-adenosyl-L-homocysteine + a thiopurine S-methylether.. The chain is Thiopurine S-methyltransferase from Shewanella baltica (strain OS223).